Reading from the N-terminus, the 145-residue chain is D-aminoacyl-tRNA deacylase (145 aa).

A Gly-cisPro motif, important for rejection of L-amino acids motif is present at residues 137–138 (GP).

The protein belongs to the DTD family. As to quaternary structure, homodimer.

The protein resides in the cytoplasm. It carries out the reaction glycyl-tRNA(Ala) + H2O = tRNA(Ala) + glycine + H(+). The enzyme catalyses a D-aminoacyl-tRNA + H2O = a tRNA + a D-alpha-amino acid + H(+). Its function is as follows. An aminoacyl-tRNA editing enzyme that deacylates mischarged D-aminoacyl-tRNAs. Also deacylates mischarged glycyl-tRNA(Ala), protecting cells against glycine mischarging by AlaRS. Acts via tRNA-based rather than protein-based catalysis; rejects L-amino acids rather than detecting D-amino acids in the active site. By recycling D-aminoacyl-tRNA to D-amino acids and free tRNA molecules, this enzyme counteracts the toxicity associated with the formation of D-aminoacyl-tRNA entities in vivo and helps enforce protein L-homochirality. This chain is D-aminoacyl-tRNA deacylase, found in Psychromonas ingrahamii (strain DSM 17664 / CCUG 51855 / 37).